A 552-amino-acid polypeptide reads, in one-letter code: CTP synthase (552 aa).

Residues 1–270 (MTKYVFVTGG…DRIICDELKL (270 aa)) are amidoligase domain. S13 contacts CTP. Residue S13 participates in UTP binding. Residues 14–19 (SLGKGI) and D71 each bind ATP. Mg(2+)-binding residues include D71 and E144. Residues 151–153 (DIE), 191–196 (KTKPTQ), and K227 each bind CTP. UTP-binding positions include 191 to 196 (KTKPTQ) and K227. The Glutamine amidotransferase type-1 domain occupies 295-547 (TIGMVGKYVD…VEAALANKQA (253 aa)). G356 contributes to the L-glutamine binding site. C383 serves as the catalytic Nucleophile; for glutamine hydrolysis. Residues 384–387 (LGMQ), E407, and R473 contribute to the L-glutamine site. Residues H520 and E522 contribute to the active site.

It belongs to the CTP synthase family. Homotetramer.

The catalysed reaction is UTP + L-glutamine + ATP + H2O = CTP + L-glutamate + ADP + phosphate + 2 H(+). It carries out the reaction L-glutamine + H2O = L-glutamate + NH4(+). The enzyme catalyses UTP + NH4(+) + ATP = CTP + ADP + phosphate + 2 H(+). It participates in pyrimidine metabolism; CTP biosynthesis via de novo pathway; CTP from UDP: step 2/2. Its activity is regulated as follows. Allosterically activated by GTP, when glutamine is the substrate; GTP has no effect on the reaction when ammonia is the substrate. The allosteric effector GTP functions by stabilizing the protein conformation that binds the tetrahedral intermediate(s) formed during glutamine hydrolysis. Inhibited by the product CTP, via allosteric rather than competitive inhibition. In terms of biological role, catalyzes the ATP-dependent amination of UTP to CTP with either L-glutamine or ammonia as the source of nitrogen. Regulates intracellular CTP levels through interactions with the four ribonucleotide triphosphates. This chain is CTP synthase, found in Burkholderia vietnamiensis (strain G4 / LMG 22486) (Burkholderia cepacia (strain R1808)).